The following is a 427-amino-acid chain: Vitamin D3 receptor (427 aa).

A DNA-binding region (nuclear receptor) is located at residues 21–96 (PRICGVCGDR…IGMMKEFILT (76 aa)). Zn(2+)-binding residues include cysteine 24, cysteine 27, cysteine 41, cysteine 44, cysteine 60, cysteine 66, cysteine 76, and cysteine 79. 2 NR C4-type zinc fingers span residues 24 to 44 (CGVCGDRATGFHFNAMTCEGC) and 60 to 84 (CPFNGDCRITKDNRRHCQACRLKRC). The segment at 97–126 (DEEVQRKREMILKRKEEEALKDSLRPKLSE) is hinge. One can recognise an NR LBD domain in the interval 127-423 (EQQRIIAILL…LTPLVLEVFG (297 aa)). Residue tyrosine 143 participates in calcitriol binding. A disordered region spans residues 158–183 (RVNDGGGSHPSRPNSRHTPSFSGDSS). A calcitriol-binding site is contributed by serine 237. Residues 246–264 (KMIPGFRDLTSEDQIVLLK) are interaction with coactivator LXXLL motif. Arginine 274, serine 278, histidine 305, and histidine 397 together coordinate calcitriol. Residues 416-424 (PLVLEVFGN) carry the 9aaTAD motif.

Belongs to the nuclear hormone receptor family. NR1 subfamily. In terms of assembly, homodimer in the absence of bound vitamin D3. Heterodimer with RXRA after vitamin D3 binding. Interacts with MED1, NCOA1, NCOA2, NCOA3 and NCOA6 coactivators, leading to a strong increase of transcription of target genes. Interacts with the corepressor NCOR1. Interacts with SNW1. Interacts with IRX4, the interaction does not affect its transactivation activity. Post-translationally, ubiquitinated by UBR5, leading to its degradation: UBR5 specifically recognizes and binds ligand-bound VDR when it is not associated with coactivators (NCOAs). In presence of NCOAs, the UBR5-degron is not accessible, preventing its ubiquitination and degradation.

It is found in the nucleus. It localises to the cytoplasm. Functionally, nuclear receptor for calcitriol, the active form of vitamin D3 which mediates the action of this vitamin on cells. Enters the nucleus upon vitamin D3 binding where it forms heterodimers with the retinoid X receptor/RXR. The VDR-RXR heterodimers bind to specific response elements on DNA and activate the transcription of vitamin D3-responsive target genes. Plays a central role in calcium homeostasis. This chain is Vitamin D3 receptor (VDR), found in Saguinus oedipus (Cotton-top tamarin).